A 641-amino-acid chain; its full sequence is FAD-binding monooxygenase ausB (641 aa).

Positions 1–68 (MAIGPKPESI…DSTTNVPYSL (68 aa)) are disordered. Polar residues predominate over residues 49-68 (WLTSTDQPQPDSTTNVPYSL). FAD contacts are provided by residues 115 to 118 (TWYW), 127 to 128 (DI), and Tyr133. Position 125–127 (125–127 (MCD)) interacts with NADP(+). NADP(+) contacts are provided by residues 272 to 278 (TGSTAVQ) and 295 to 296 (RT).

Belongs to the FAD-binding monooxygenase family. FAD serves as cofactor.

The catalysed reaction is protoaustinoid A + AH2 + O2 = berkeleyone A + A + H2O. Its pathway is secondary metabolite biosynthesis; terpenoid biosynthesis. FAD-binding monooxygenase; part of the gene cluster A that mediates the biosynthesis of the fungal meroterpenoid acetoxydehydroaustin. The first step of the pathway is the synthesis of 3,5-dimethylorsellinic acid by the polyketide synthase ausA. 3,5-dimethylorsellinic acid is then prenylated by the polyprenyl transferase ausN. Further epoxidation by the FAD-dependent monooxygenase ausM and cyclization by the probable terpene cyclase ausL lead to the formation of protoaustinoid A. Protoaustinoid A is then oxidized to spiro-lactone preaustinoid A3 by the combined action of the FAD-binding monooxygenases ausB and ausC, and the dioxygenase ausE. Acid-catalyzed keto-rearrangement and ring contraction of the tetraketide portion of preaustinoid A3 by ausJ lead to the formation of preaustinoid A4. The aldo-keto reductase ausK, with the help of ausH, is involved in the next step by transforming preaustinoid A4 into isoaustinone which is in turn hydroxylated by the P450 monooxygenase ausI to form austinolide. The cytochrome P450 monooxygenase ausG then modifies austinolide to austinol. Austinol is further acetylated to austin by the O-acetyltransferase ausP, which spontaneously changes to dehydroaustin. The cytochrome P450 monooxygenase then converts dehydroaustin is into 7-dehydrodehydroaustin. The hydroxylation catalyzed by ausR permits the second O-acetyltransferase ausQ to add an additional acetyl group to the molecule, leading to the formation of acetoxydehydroaustin. Due to genetic rearrangements of the clusters and the subsequent loss of some enzymes, the end product of the Penicillium brasilianum austinoid biosynthesis clusters is acetoxydehydroaustin. This is FAD-binding monooxygenase ausB from Penicillium brasilianum.